Consider the following 271-residue polypeptide: Phosphate import ATP-binding protein PstB (271 aa).

An ABC transporter domain is found at 25–266 (FDTKNLNLWY…PSDKRTEDYI (242 aa)). 57–64 (GPSGCGKS) is a binding site for ATP.

The protein belongs to the ABC transporter superfamily. Phosphate importer (TC 3.A.1.7) family. In terms of assembly, the complex is composed of two ATP-binding proteins (PstB), two transmembrane proteins (PstC and PstA) and a solute-binding protein (PstS).

It localises to the cell membrane. The catalysed reaction is phosphate(out) + ATP + H2O = ADP + 2 phosphate(in) + H(+). Its function is as follows. Part of the ABC transporter complex PstSACB involved in phosphate import. Responsible for energy coupling to the transport system. This Bacillus cereus (strain ATCC 14579 / DSM 31 / CCUG 7414 / JCM 2152 / NBRC 15305 / NCIMB 9373 / NCTC 2599 / NRRL B-3711) protein is Phosphate import ATP-binding protein PstB.